A 546-amino-acid polypeptide reads, in one-letter code: CTP synthase (546 aa).

The amidoligase domain stretch occupies residues 1–266 (MARYIFITGG…DTEVLDVFGL (266 aa)). Serine 13 provides a ligand contact to CTP. Serine 13 lines the UTP pocket. 14-19 (SLGKGL) lines the ATP pocket. Residue tyrosine 54 participates in L-glutamine binding. ATP is bound at residue aspartate 71. 2 residues coordinate Mg(2+): aspartate 71 and glutamate 140. CTP-binding positions include 147–149 (DIE), 187–192 (KTKPTQ), and lysine 223. Residues 187–192 (KTKPTQ) and lysine 223 each bind UTP. Residues 293 to 545 (NIAIVGKYTG…IGAAKERSRL (253 aa)) form the Glutamine amidotransferase type-1 domain. Alanine 357 serves as a coordination point for L-glutamine. Residue cysteine 384 is the Nucleophile; for glutamine hydrolysis of the active site. Residues 385–388 (FGMQ), glutamate 408, and arginine 473 each bind L-glutamine. Residues histidine 518 and glutamate 520 contribute to the active site.

Belongs to the CTP synthase family. As to quaternary structure, homotetramer.

It catalyses the reaction UTP + L-glutamine + ATP + H2O = CTP + L-glutamate + ADP + phosphate + 2 H(+). The catalysed reaction is L-glutamine + H2O = L-glutamate + NH4(+). The enzyme catalyses UTP + NH4(+) + ATP = CTP + ADP + phosphate + 2 H(+). Its pathway is pyrimidine metabolism; CTP biosynthesis via de novo pathway; CTP from UDP: step 2/2. With respect to regulation, allosterically activated by GTP, when glutamine is the substrate; GTP has no effect on the reaction when ammonia is the substrate. The allosteric effector GTP functions by stabilizing the protein conformation that binds the tetrahedral intermediate(s) formed during glutamine hydrolysis. Inhibited by the product CTP, via allosteric rather than competitive inhibition. In terms of biological role, catalyzes the ATP-dependent amination of UTP to CTP with either L-glutamine or ammonia as the source of nitrogen. Regulates intracellular CTP levels through interactions with the four ribonucleotide triphosphates. The polypeptide is CTP synthase (Phenylobacterium zucineum (strain HLK1)).